The following is a 299-amino-acid chain: Delta-9 desaturase-like 3 protein (299 aa).

2 helical membrane-spanning segments follow: residues 38–57 (AVGA…TWEA) and 58–76 (FRFA…TFSY). Residues 77–82 (HRNLTH) carry the Histidine box-1 motif. The Histidine box-2 signature appears at 114–118 (HRFHH). 2 helical membrane passes run 174–194 (IGLH…LPYL) and 198–218 (VGVG…ACHI). The Histidine box-3 signature appears at 246–250 (HNNHH). Residues 262–282 (WYQVDLTWYLIWFFQVLGLAT) form a helical membrane-spanning segment.

It belongs to the fatty acid desaturase type 1 family. Requires Fe cation as cofactor.

The protein resides in the endoplasmic reticulum membrane. It participates in lipid metabolism; polyunsaturated fatty acid biosynthesis. The polypeptide is Delta-9 desaturase-like 3 protein (Arabidopsis thaliana (Mouse-ear cress)).